The sequence spans 288 residues: Small ribosomal subunit protein uS15m (288 aa).

A mitochondrion-targeting transit peptide spans 1-50; the sequence is MRLFEGAFQPWKLASTNLMQQCLLLNKKSQFHTTCILQGLKKQKANQRRK.

The protein belongs to the universal ribosomal protein uS15 family. As to quaternary structure, component of the mitochondrial small ribosomal subunit (mt-SSU). Mature yeast 74S mitochondrial ribosomes consist of a small (37S) and a large (54S) subunit. The 37S small subunit contains a 15S ribosomal RNA (15S mt-rRNA) and at least 32 different proteins. The 54S large subunit contains a 21S rRNA (21S mt-rRNA) and at least 45 different proteins.

Its subcellular location is the mitochondrion. Component of the mitochondrial ribosome (mitoribosome), a dedicated translation machinery responsible for the synthesis of mitochondrial genome-encoded proteins, including at least some of the essential transmembrane subunits of the mitochondrial respiratory chain. The mitoribosomes are attached to the mitochondrial inner membrane and translation products are cotranslationally integrated into the membrane. This chain is Small ribosomal subunit protein uS15m (mrps28), found in Schizosaccharomyces pombe (strain 972 / ATCC 24843) (Fission yeast).